Consider the following 144-residue polypeptide: Putative pre-16S rRNA nuclease (144 aa).

It belongs to the YqgF nuclease family.

The protein resides in the cytoplasm. Functionally, could be a nuclease involved in processing of the 5'-end of pre-16S rRNA. This chain is Putative pre-16S rRNA nuclease, found in Acaryochloris marina (strain MBIC 11017).